Consider the following 1723-residue polypeptide: Lys-gingipain (1723 aa).

The signal sequence occupies residues 1-24 (MRKLLLLIAASLLGVGLYAQSAKI). Positions 25-228 (KLDAPTTRTT…ETAYKQLFNR (204 aa)) are excised as a propeptide. Ca(2+) contacts are provided by Asp313, Asp337, Asp339, Phe341, and Glu343. Catalysis depends on His444, which acts as the Proton donor. Catalysis depends on Cys477, which acts as the Nucleophile. Positions 482 and 491 each coordinate Ca(2+). Positions 964 to 985 (WDAPNGTPNPNPNPNPGTTTLS) are disordered. Ser987, Glu989, Asp1000, Asp1002, Asp1004, His1006, Ser1021, Gly1023, Asn1042, Asp1145, Glu1146, Asp1430, Glu1432, Asp1444, Asp1446, Asp1448, Asn1450, Ser1480, Asn1495, and Asp1585 together coordinate Ca(2+).

This sequence belongs to the peptidase C25 family. Proteolytically cleaved into a catalytic subunit and three adhesins. Arg-gingipain is involved in this post-translational processing.

It localises to the secreted. It carries out the reaction Endopeptidase with strict specificity for lysyl bonds.. With respect to regulation, activated by the thiol-reducing agents cysteine, 2-mercaptoethanol and dithiothreitol. Inhibited by iodacetamide, iodoacetic acid, leupeptin, tosyl-L-lysine and tosyl-L-phenylalanine. Not inhibited by elastatinal, chymostatin, cystatins, alpha1-antichymotrypsin or the serine protease inhibitors phenylmethylsulfonyl fluoride and diisopropylfluorophosphate. Not inhibited by metal ion chelators. Inhibited by the heavy metal ions Fe(3+), Zn(2+), Cu(2+) and Mn(2+). Functionally, cysteine proteinase with a strong preference for substrates with Lys in the P1 position. Hydrolyzes bovine hemoglobin, bovine serum albumin, casein, human placental type I collagen and human IgA and IgG. Disrupts the functions of polymorphonuclear leukocytes. May act as a virulence factor in the development of peridontal disease. Involved in the coaggregation of P.gingivalis with other oral bacteria. The sequence is that of Lys-gingipain from Porphyromonas gingivalis (strain ATCC 33277 / DSM 20709 / CIP 103683 / JCM 12257 / NCTC 11834 / 2561).